The chain runs to 231 residues: uncharacterized protein (231 aa).

The region spanning 3–119 is the RCK N-terminal domain; it reads RADFCIIGLG…RTMGIREALI (117 aa). Residues 134–221 form the RCK C-terminal domain; sequence HGMETEIINL…VNQYLRYINP (88 aa).

This is an uncharacterized protein from Mycoplasma pneumoniae (strain ATCC 29342 / M129 / Subtype 1) (Mycoplasmoides pneumoniae).